A 199-amino-acid polypeptide reads, in one-letter code: Ribosome maturation factor RimP (199 aa).

Positions Ala-165–Gln-199 are disordered. A compositionally biased stretch (acidic residues) spans Pro-172–Gln-199.

The protein belongs to the RimP family.

It localises to the cytoplasm. Required for maturation of 30S ribosomal subunits. This is Ribosome maturation factor RimP from Hyphomonas neptunium (strain ATCC 15444).